The primary structure comprises 964 residues: Glycine dehydrogenase (decarboxylating) (964 aa).

At Lys-710 the chain carries N6-(pyridoxal phosphate)lysine.

It belongs to the GcvP family. In terms of assembly, the glycine cleavage system is composed of four proteins: P, T, L and H. The cofactor is pyridoxal 5'-phosphate.

It catalyses the reaction N(6)-[(R)-lipoyl]-L-lysyl-[glycine-cleavage complex H protein] + glycine + H(+) = N(6)-[(R)-S(8)-aminomethyldihydrolipoyl]-L-lysyl-[glycine-cleavage complex H protein] + CO2. Its function is as follows. The glycine cleavage system catalyzes the degradation of glycine. The P protein binds the alpha-amino group of glycine through its pyridoxal phosphate cofactor; CO(2) is released and the remaining methylamine moiety is then transferred to the lipoamide cofactor of the H protein. The sequence is that of Glycine dehydrogenase (decarboxylating) from Saccharophagus degradans (strain 2-40 / ATCC 43961 / DSM 17024).